Reading from the N-terminus, the 66-residue chain is Delta-buthitoxin-Hj1a (66 aa).

An LCN-type CS-alpha/beta domain is found at 4–66 (RDAYIAQPHN…EPIKVPGKCH (63 aa)). 4 cysteine pairs are disulfide-bonded: cysteine 14–cysteine 65, cysteine 18–cysteine 38, cysteine 24–cysteine 48, and cysteine 28–cysteine 50.

It belongs to the long (4 C-C) scorpion toxin superfamily. Sodium channel inhibitor family. Alpha subfamily. Expressed by the venom gland.

It localises to the secreted. This recombinant toxin slows fast inactivation on Nav1.1/SCN1A (EC(50)=17 nM), Nav1.4/SN4A (EC(50)=7.5 nM), Nav1.5/SCN5A (EC(50)=9.2 nM) and Nav1.6/SCN8A (EC(50)=37.3 nM) voltage-gated sodium channels. On Nav1.1/SCN1A channel, it acts as an agonist by inducing a shift in both the voltage dependence of channel inactivation (alpha-toxin activity) and activation (beta-toxin activity). In vivo, shows moderate insecticidal activities. It induces irreversible paralysis in blowflies and lethal effects in D.melanogaster. The polypeptide is Delta-buthitoxin-Hj1a (Hottentotta judaicus (Black scorpion)).